A 185-amino-acid polypeptide reads, in one-letter code: Pro-adrenomedullin (185 aa).

A signal peptide spans 1–21 (MKLVSIALMLLGSLAVLGADT). Position 41 is an arginine amide (Arg41). The propeptide occupies 45-91 (ELQASSSYPTGLVDEKTVPTQTLGLQDKQSTSSTPQASTQSTAHIRV). The interval 68–89 (GLQDKQSTSSTPQASTQSTAHI) is disordered. A compositionally biased stretch (low complexity) spans 73–87 (QSTSSTPQASTQSTA). Cys107 and Cys112 are oxidised to a cystine. The interval 125 to 185 (TDKDKDGMAP…HQDISRVSRL (61 aa)) is disordered. Tyr143 carries the tyrosine amide modification. The propeptide at 150-185 (SLPEVLRARTVESSQEQTHSAPASPAHQDISRVSRL) is preproAM C-terminal fragment. Over residues 160–170 (VESSQEQTHSA) the composition is skewed to polar residues.

The protein belongs to the adrenomedullin family. In terms of tissue distribution, expressed in adrenal glands, lung, kidney, heart, spleen, duodenum and submandibular glands.

The protein localises to the secreted. Its function is as follows. Adrenomedullin/ADM and proadrenomedullin N-20 terminal peptide/PAMP are peptide hormones that act as potent hypotensive and vasodilatator agents. Numerous actions have been reported most related to the physiologic control of fluid and electrolyte homeostasis. ADM function is mediated by the CALCRL-RAMP2 and CALCRL-RAMP3 receptor complexes with ADM showing the highest potency for the CALCRL-RAMP2 complex. The sequence is that of Pro-adrenomedullin from Rattus norvegicus (Rat).